A 613-amino-acid polypeptide reads, in one-letter code: Proton myo-inositol cotransporter hmit-1.2 (613 aa).

The Cytoplasmic portion of the chain corresponds to 1–21 (MVAVEFKVSESGRPRPEKNPK). The chain crosses the membrane as a helical span at residues 22-42 (LGFFVYLLGSAAIIGGFLFGY). Topologically, residues 43 to 69 (DTSVVSAAMLYVPEAPGLKPMGTVWKE) are extracellular. The chain crosses the membrane as a helical span at residues 70–90 (VIVSITPGMAAVGAWFSGAGS). The Cytoplasmic segment spans residues 91 to 96 (DRYGRK). Residues 97 to 117 (PIIIGSTLIFVCGAVICAVAW) traverse the membrane as a helical segment. At 118–119 (TK) the chain is on the extracellular side. A helical membrane pass occupies residues 120-140 (IVMLIGRIFLGVGIGFASMVV). The Cytoplasmic portion of the chain corresponds to 141–157 (PVYLGEASPTHVRGTLV). A helical membrane pass occupies residues 158 to 178 (SAFAMMISFGQVVANIMGGVF). Residues 179 to 189 (SYWEPYTIGWR) lie on the Extracellular side of the membrane. The chain crosses the membrane as a helical span at residues 190-210 (LMFAFAGIPALIQFVCFIFLP). Over 211-279 (ETPRWLYENG…RILKTPHVLK (69 aa)) the chain is Cytoplasmic. The chain crosses the membrane as a helical span at residues 280-300 (ACFIGSMLQAFQQLAGINTIL). Topologically, residues 301 to 317 (YYTADIIRSAGIENYHT) are extracellular. The helical transmembrane segment at 318 to 338 (IIWISVILSICNLIGPFAPMF) threads the bilayer. Topologically, residues 339–347 (FIEKLGRRK) are cytoplasmic. The chain crosses the membrane as a helical span at residues 348 to 368 (LFLFSCAGVVVSLVLIGVSFL). Residues 369-472 (LVGNDSAPNF…QKHHCTTSYT (104 aa)) lie on the Extracellular side of the membrane. Residues asparagine 372, asparagine 451, and asparagine 456 are each glycosylated (N-linked (GlcNAc...) asparagine). Residues 473–493 (ILPIVMMGVYLLTFSCGFTSL) traverse the membrane as a helical segment. The Cytoplasmic portion of the chain corresponds to 494-515 (PWVLNSEFYPMWARSTCVSIST). The helical transmembrane segment at 516-536 (LSNWVFNLIIALTYLSLTHAI) threads the bilayer. The Extracellular portion of the chain corresponds to 537–539 (TKY). The chain crosses the membrane as a helical span at residues 540–560 (GAFWLYAIFTIIAFIFIYFLV). At 561-613 (PETTGYSIDEVEMLFMNKRQRNIAMQARQAKLDAASDKDKNSSTSLSTETITM) the chain is on the cytoplasmic side. Residues 594 to 613 (AASDKDKNSSTSLSTETITM) form a disordered region. Residues 602-613 (SSTSLSTETITM) show a composition bias toward polar residues.

The protein belongs to the major facilitator superfamily. Sugar transporter (TC 2.A.1.1) family. As to expression, expressed in the excretory canal cell and in pairs of amphid and sheath glia.

The protein resides in the cell membrane. It is found in the perikaryon. It catalyses the reaction myo-inositol(out) + H(+)(out) = myo-inositol(in) + H(+)(in). H(+)-myo-inositol cotransporter. Probably by promoting the transport of myo-inositol regulates intracellular osmosis in response to hyperosmotic stress. This Caenorhabditis elegans protein is Proton myo-inositol cotransporter hmit-1.2.